Consider the following 206-residue polypeptide: Ephrin-A4 (206 aa).

A signal peptide spans 1-25 (MRLLPLLRTVLWAALLGSRLPGCSS). The region spanning 26-158 (LRHPIYWNSS…RLQVSVCCKE (133 aa)) is the Ephrin RBD domain. Asn-33 is a glycosylation site (N-linked (GlcNAc...) asparagine). Residues 41-43 (RGD) carry the Cell attachment site motif. Intrachain disulfides connect Cys-58–Cys-99 and Cys-86–Cys-147. Residue Asn-98 is glycosylated (N-linked (GlcNAc...) asparagine). Residues 161-180 (SSHESAHPVGSPGESGTSGW) form a disordered region. Ser-175 carries the GPI-anchor amidated serine lipid modification. Positions 176–206 (GTSGWRGGHAPSPLCLLLLLLLPILRLLRVL) are cleaved as a propeptide — removed in mature form.

This sequence belongs to the ephrin family. Expressed in myogenic progenitor cells.

The protein resides in the cell membrane. Its function is as follows. Cell surface GPI-bound ligand for Eph receptors, a family of receptor tyrosine kinases which are crucial for migration, repulsion and adhesion during neuronal, vascular and epithelial development. Binds promiscuously Eph receptors residing on adjacent cells, leading to contact-dependent bidirectional signaling into neighboring cells. May play a role in the interaction between activated B-lymphocytes and dendritic cells in tonsils. In Mus musculus (Mouse), this protein is Ephrin-A4 (Efna4).